A 654-amino-acid chain; its full sequence is DNA mismatch repair protein MutL (654 aa).

The disordered stretch occupies residues 358-437; the sequence is KEHVRETMQQ…ADRRTDESLP (80 aa). Polar residues predominate over residues 384-394; the sequence is TSIGNSWSPSH. The segment covering 413 to 434 has biased composition (basic and acidic residues); that stretch reads RNERVETNTEEKYEQADRRTDE.

It belongs to the DNA mismatch repair MutL/HexB family.

This protein is involved in the repair of mismatches in DNA. It is required for dam-dependent methyl-directed DNA mismatch repair. May act as a 'molecular matchmaker', a protein that promotes the formation of a stable complex between two or more DNA-binding proteins in an ATP-dependent manner without itself being part of a final effector complex. The protein is DNA mismatch repair protein MutL of Shouchella clausii (strain KSM-K16) (Alkalihalobacillus clausii).